Here is a 213-residue protein sequence, read N- to C-terminus: Imidazole glycerol phosphate synthase subunit HisH (213 aa).

Residues 1 to 212 (MLAILDYKAG…HRYCTEAADA (212 aa)) form the Glutamine amidotransferase type-1 domain. Cys79 (nucleophile) is an active-site residue. Residues His187 and Glu189 contribute to the active site.

Heterodimer of HisH and HisF.

It localises to the cytoplasm. It catalyses the reaction 5-[(5-phospho-1-deoxy-D-ribulos-1-ylimino)methylamino]-1-(5-phospho-beta-D-ribosyl)imidazole-4-carboxamide + L-glutamine = D-erythro-1-(imidazol-4-yl)glycerol 3-phosphate + 5-amino-1-(5-phospho-beta-D-ribosyl)imidazole-4-carboxamide + L-glutamate + H(+). It carries out the reaction L-glutamine + H2O = L-glutamate + NH4(+). The protein operates within amino-acid biosynthesis; L-histidine biosynthesis; L-histidine from 5-phospho-alpha-D-ribose 1-diphosphate: step 5/9. In terms of biological role, IGPS catalyzes the conversion of PRFAR and glutamine to IGP, AICAR and glutamate. The HisH subunit catalyzes the hydrolysis of glutamine to glutamate and ammonia as part of the synthesis of IGP and AICAR. The resulting ammonia molecule is channeled to the active site of HisF. This is Imidazole glycerol phosphate synthase subunit HisH from Nitratidesulfovibrio vulgaris (strain DP4) (Desulfovibrio vulgaris).